Here is a 323-residue protein sequence, read N- to C-terminus: Secreted frizzled-related protein 3 (323 aa).

Positions Met-1 to Ala-32 are cleaved as a signal peptide. Residues Ala-33–Pro-150 enclose the FZ domain. 5 disulfide bridges follow: Cys-35–Cys-96, Cys-43–Cys-89, Cys-80–Cys-119, Cys-108–Cys-147, and Cys-112–Cys-136. Asn-49 carries an N-linked (GlcNAc...) asparagine glycan. The region spanning Cys-178–Leu-298 is the NTR domain. The segment at Gly-299–Ser-323 is disordered. Positions Ser-304 to Ser-323 are enriched in polar residues.

It belongs to the secreted frizzled-related protein (sFRP) family. In terms of assembly, interacts with MYOC. In terms of tissue distribution, expressed in kidney, brain, testis. Weak expression in spleen and heart.

It localises to the secreted. In terms of biological role, soluble frizzled-related proteins (sFRPS) function as modulators of Wnt signaling through direct interaction with Wnts. They have a role in regulating cell growth and differentiation in specific cell types. SFRP3/FRZB appears to be involved in limb skeletogenesis. Antagonist of Wnt8 signaling. Regulates chondrocyte maturation and long bone development. The polypeptide is Secreted frizzled-related protein 3 (Frzb) (Mus musculus (Mouse)).